The primary structure comprises 271 residues: MASLEIIKLEWVTPIFKVVEHSQDGLYILLQGQISWQSSGQTYDLDEGNMLFLRRGSYAVRCGTKEPCQLLWIPLPGSFLSTFLHRFGSLLSEIGRDNSTPKPLLIFNISPILSQSIQNLCAILERSDFPSVLTQLRIEELLLLLAFSSQGTLFLSALRHLGNRPEERLQKFMEENYLQGWKLSKFAREFGMGLTTFKELFGTVYGISPRAWISERRILYAHQLLLNGKMSIVDIAMEAGFSSQSYFTQSYRRRFGCTPSQARLTKIATTG.

The 99-residue stretch at 167 to 265 folds into the HTH araC/xylS-type domain; it reads ERLQKFMEEN…GCTPSQARLT (99 aa). DNA-binding regions (H-T-H motif) lie at residues 184 to 205 and 232 to 255; these read SKFA…GTVY and IVDI…RRRF.

Its function is as follows. Transcriptional activator of the thermally regulated virulent yopE gene. LcrF activity could be modulated by the interaction with an inducer molecule serving as a temperature messenger. The availability of the messenger would in turn be controlled by a temperature-responsive process serving as a cellular thermometer. The chain is Thermoregulatory protein LcrF (lcrF) from Yersinia pestis.